Consider the following 443-residue polypeptide: MLTVLYLPIARKTFNTDVADTLRQETEELLQETVELISPMELMTSPDDLDAFLQDVSSPPDAIVYQSLTFADGEFIQAAVDRYSIPVIVWSVREPEVGGRLQLNSLTGGNSTSHVLRSNSHPYSFLFGNPDEAAVQERLGSLFRVMDTVKQVKSLNIGVIGEHPPGFYFSGTDTGELHDVFGAKVTTVDLYDAFARAKDVPEERWLPEVETAEKQVLTLNRDDATVQRFAQFTSAMREYIAEENLSALAIRCWPDFFNELGAAACSTLSHLTEESMVSACESDIHGALSMFILNRLSAGRAPYLGDMVHVNEENNALVFWHCGAGAYSLAREATGAQPGVHPNRKLGFTMEFGLKAGEVTLFRVGHTPEGYRLLVFKGEALDVPQRFNGTTVEIGLKQPVHSVMQELMEEGFEPHYALVHADVTKEIREIGRLFNLPVVEIEA.

This sequence belongs to the SqvD family.

It carries out the reaction 6-sulfo-beta-D-quinovose = 6-deoxy-6-sulfo-D-fructose. Part of the sulfo-EMP2 pathway, a D-sulfoquinovose degradation pathway that produces sulfolactate (SL). Catalyzes the isomerization of sulfoquinovose (SQ) to 6-deoxy-6-sulfo-D-fructose (SF). The protein is Sulfoquinovose isomerase of Alkalicoccus urumqiensis (Bacillus urumqiensis).